The sequence spans 60 residues: Cytotoxin 10 (60 aa).

4 disulfides stabilise this stretch: cysteine 3–cysteine 21, cysteine 14–cysteine 38, cysteine 42–cysteine 53, and cysteine 54–cysteine 59.

This sequence belongs to the three-finger toxin family. Short-chain subfamily. Type IA cytotoxin sub-subfamily. Monomer in solution; Homodimer and oligomer in the presence of negatively charged lipids forming a pore with a size ranging between 20 and 30 Angstroms. As to expression, expressed by the venom gland.

It is found in the secreted. The protein localises to the target cell membrane. Its function is as follows. Shows cytolytic activity on many different cells by forming pore in lipid membranes. In vivo, increases heart rate or kills the animal by cardiac arrest. In addition, it binds to heparin with high affinity, interacts with Kv channel-interacting protein 1 (KCNIP1) in a calcium-independent manner, and binds to integrin alpha-V/beta-3 (ITGAV/ITGB3) with moderate affinity. This chain is Cytotoxin 10, found in Naja annulifera (Banded Egyptian cobra).